Consider the following 743-residue polypeptide: Conserved oligomeric Golgi complex subunit 8 (743 aa).

Disordered stretches follow at residues 549–672 (EDGP…TEPE) and 704–743 (TQDD…KKDD). Composition is skewed to basic and acidic residues over residues 563-581 (ESVK…HGTD), 594-621 (PVKE…HETP), 633-647 (SEAK…HLEL), and 654-664 (QEIREQEHKEV). Acidic residues predominate over residues 704–726 (TQDDPIEEEEGWGWGDDDGEEQE). Over residues 727 to 743 (ISSKEVESPKEKCKKDD) the composition is skewed to basic and acidic residues.

The protein belongs to the COG8 family. Component of the conserved oligomeric Golgi complex which is composed of eight different subunits and is required for normal Golgi morphology and localization.

The protein localises to the golgi apparatus membrane. Its function is as follows. Required for normal Golgi function. This is Conserved oligomeric Golgi complex subunit 8 (cogc-8) from Caenorhabditis elegans.